A 192-amino-acid chain; its full sequence is Ribosomal RNA large subunit methyltransferase E (192 aa).

Positions 48, 50, 67, 85, and 107 each coordinate S-adenosyl-L-methionine. The active-site Proton acceptor is Lys-147.

Belongs to the class I-like SAM-binding methyltransferase superfamily. RNA methyltransferase RlmE family.

Its subcellular location is the cytoplasm. The catalysed reaction is uridine(2552) in 23S rRNA + S-adenosyl-L-methionine = 2'-O-methyluridine(2552) in 23S rRNA + S-adenosyl-L-homocysteine + H(+). Functionally, specifically methylates the uridine in position 2552 of 23S rRNA at the 2'-O position of the ribose in the fully assembled 50S ribosomal subunit. The chain is Ribosomal RNA large subunit methyltransferase E from Borrelia garinii subsp. bavariensis (strain ATCC BAA-2496 / DSM 23469 / PBi) (Borreliella bavariensis).